Here is a 181-residue protein sequence, read N- to C-terminus: RNA pyrophosphohydrolase (181 aa).

The 143-residue stretch at 6-148 (GFRPNVGIIV…KRQVYRQALQ (143 aa)) folds into the Nudix hydrolase domain. The Nudix box signature appears at 38-59 (GGVEANETPLEALYRELREEVG).

It belongs to the Nudix hydrolase family. RppH subfamily. A divalent metal cation serves as cofactor.

Functionally, accelerates the degradation of transcripts by removing pyrophosphate from the 5'-end of triphosphorylated RNA, leading to a more labile monophosphorylated state that can stimulate subsequent ribonuclease cleavage. This Halorhodospira halophila (strain DSM 244 / SL1) (Ectothiorhodospira halophila (strain DSM 244 / SL1)) protein is RNA pyrophosphohydrolase.